We begin with the raw amino-acid sequence, 204 residues long: Cytochrome bo(3) ubiquinol oxidase subunit 3 (204 aa).

Topologically, residues 1–31 (MATDTLTHATAHAHEHGHHDAGGTKIFGFWI) are cytoplasmic. The chain crosses the membrane as a helical span at residues 32 to 50 (YLMSDCILFSILFATYAVL). Residues 51 to 66 (VNGTAGGPTGKDIFEL) lie on the Periplasmic side of the membrane. The chain crosses the membrane as a helical span at residues 67-85 (PFVLVETFLLLFSSITYGM). Over 86-101 (AAIAMYKNNKSQVISW) the chain is Cytoplasmic. Residues 102–120 (LALTWLFGAGFIGMEIYEF) traverse the membrane as a helical segment. Residues 121–142 (HHLIVNGMGPDRSGFLSAFFAL) are Periplasmic-facing. Residues 143–161 (VGTHGLHVTSGLIWMAVLM) form a helical membrane-spanning segment. Residues 162-184 (VQIARRGLTSTNRTRIMCLSLFW) lie on the Cytoplasmic side of the membrane. A helical membrane pass occupies residues 185–203 (HFLDVVWICVFTVVYLMGA). Residue Met-204 is a topological domain, periplasmic.

This sequence belongs to the cytochrome c oxidase subunit 3 family. As to quaternary structure, heterooctamer of two A chains, two B chains, two C chains and two D chains.

The protein resides in the cell inner membrane. Its function is as follows. Cytochrome bo(3) ubiquinol terminal oxidase is the component of the aerobic respiratory chain of E.coli that predominates when cells are grown at high aeration. Has proton pump activity across the membrane in addition to electron transfer, pumping 2 protons/electron. This chain is Cytochrome bo(3) ubiquinol oxidase subunit 3 (cyoC), found in Escherichia coli O6:H1 (strain CFT073 / ATCC 700928 / UPEC).